Here is a 626-residue protein sequence, read N- to C-terminus: Interferon-induced GTP-binding protein MxC (626 aa).

One can recognise a Dynamin-type G domain in the interval 40-313 (DLNLPAIAVI…LVEHIAKNVP (274 aa)). The interval 50–57 (GDQSSGKS) is G1 motif. GTP is bound at residue 50 to 57 (GDQSSGKS). Residues 75 to 77 (VTR) form a G2 motif region. Residues 151–154 (DLPG) form a G3 motif region. Residues 151-155 (DLPGI) and 220-223 (TKPD) contribute to the GTP site. Positions 220 to 223 (TKPD) are G4 motif. The tract at residues 252 to 255 (KCRG) is G5 motif. The GED domain occupies 534–624 (LRETAFHLTS…ALPKVVHSAN (91 aa)).

Belongs to the TRAFAC class dynamin-like GTPase superfamily. Dynamin/Fzo/YdjA family.

Its subcellular location is the cytoplasm. This chain is Interferon-induced GTP-binding protein MxC (mxc), found in Danio rerio (Zebrafish).